Consider the following 653-residue polypeptide: MHAPPTATRRSGPRRTHGIMARLVRLAAGVLVVTLVIGALTALSADDAKTHPHKVCIHDELQQSLLDSVAQQGLAPQRVSRVGLPYVASATAAPAAQVGGVDFALAGDSAPDVTRSAEWGELRITVSAEELTDPAYHCATVGQVISNHIDDYVTCTADDIMTAEKLDILMNYLIPEALQMHKDRLQVQQVQGTWKVARMTSYCGRFKVPEEHFTTGLSNTDFVLYVASVPTSPGVLAWANTCQVFSNDQPAVGVINIPAATITERYDHLMVHAVTHEIAHSLGFSNAFFTNTGIGQFVTGVRGNPDTVPVINSPTVVAKAREHYGCDDVTYVELEDAGGSGTMGSHWKIRNAQDELMAGISGVAYYTSLTLSAFEDLGYYKANYSNAETMKWGKDVGCAFLTGKCVVDNVTQFPSMYCDKDENVYRCHTARLNLGSCEVTDYTFDLPDYLQYFTVPSVGGSADYYDYCPYIVRSPIGSCTQAASSASPFVSAFNTFSMASRCIDGTFTPKSTGGATVTAHLGMCTNVACNTADKTYSIQVYGNGAYIPCTPGATISLDTVSDAFEAGGNITCPPYLEVCQSNVKGAMDYESMTNSGSGSSRPAPVEPSGSGSGSSAATTAPSPTRDGSAAADRIAPRTAAVALLALAVAAACV.

The first 44 residues, 1-44 (MHAPPTATRRSGPRRTHGIMARLVRLAAGVLVVTLVIGALTALS), serve as a signal peptide directing secretion. A propeptide spans 45-113 (ADDAKTHPHK…ALAGDSAPDV (69 aa)) (activation peptide). 2 disulfide bridges follow: C138–C155 and C203–C242. A Zn(2+)-binding site is contributed by H276. The active site involves E277. The Zn(2+) site is built by H280 and H346. 7 disulfide bridges follow: C326-C398, C405-C468, C418-C437, C427-C502, C479-C524, C529-C579, and C549-C572. 2 N-linked (GlcNAc...) asparagine glycosylation sites follow: N383 and N409. N-linked (GlcNAc...) asparagine glycosylation is present at N569. Residues 590–631 (ESMTNSGSGSSRPAPVEPSGSGSGSSAATTAPSPTRDGSAAA) are disordered. A compositionally biased stretch (polar residues) spans 591–600 (SMTNSGSGSS). Over residues 607-631 (PSGSGSGSSAATTAPSPTRDGSAAA) the composition is skewed to low complexity. S628 carries GPI-anchor amidated serine lipidation. Residues 629–653 (AAADRIAPRTAAVALLALAVAAACV) constitute a propeptide, removed in mature form.

The protein belongs to the peptidase M8 family. Zn(2+) serves as cofactor.

Its subcellular location is the cell membrane. The enzyme catalyses Preference for hydrophobic residues at P1 and P1' and basic residues at P2' and P3'. A model nonapeptide is cleaved at -Ala-Tyr-|-Leu-Lys-Lys-.. Plays an integral role during the infection of macrophages in the mammalian host. In Crithidia fasciculata, this protein is Leishmanolysin homolog (gp63).